Consider the following 194-residue polypeptide: dCTP deaminase, dUMP-forming (194 aa).

DCTP-binding positions include 105 to 110 (RSSMGR), aspartate 123, 131 to 133 (TLE), glutamine 152, tyrosine 166, lysine 174, and glutamine 178. The active-site Proton donor/acceptor is glutamate 133.

Belongs to the dCTP deaminase family. As to quaternary structure, homotrimer.

The catalysed reaction is dCTP + 2 H2O = dUMP + NH4(+) + diphosphate. The protein operates within pyrimidine metabolism; dUMP biosynthesis; dUMP from dCTP: step 1/1. Bifunctional enzyme that catalyzes both the deamination of dCTP to dUTP and the hydrolysis of dUTP to dUMP without releasing the toxic dUTP intermediate. The polypeptide is dCTP deaminase, dUMP-forming (Methanobrevibacter smithii (strain ATCC 35061 / DSM 861 / OCM 144 / PS)).